Reading from the N-terminus, the 144-residue chain is Large ribosomal subunit protein uL13 (144 aa).

Belongs to the universal ribosomal protein uL13 family. Part of the 50S ribosomal subunit.

In terms of biological role, this protein is one of the early assembly proteins of the 50S ribosomal subunit, although it is not seen to bind rRNA by itself. It is important during the early stages of 50S assembly. This chain is Large ribosomal subunit protein uL13, found in Moorella thermoacetica (strain ATCC 39073 / JCM 9320).